We begin with the raw amino-acid sequence, 276 residues long: MKEKIALFGAGGKMGVRLAKNLLKSDYRVSHVEVSEVGKKRLKDELGLECVSTEAALDNVDVVILAVPDTIIGKIAAQIAPQLRPGTMVMTLDAAAPFAGHLPDRPDLTYFVAHPCHPLIFNDETDPEARRDYFGGGAAKQSITSALMQGPEEAFDLGEAVAKVIYAPILRSYRLTVDQMALLEPGLSETICATLLQVMREAMDETVRRGVPKEAARDFLLGHMNILGAVIFNEIPGAFSDACNKAIEFGKPRLMRDDWIKVFDREEIAESIRRIT.

Residues 12–14 (GKM), Glu33, and Asp69 contribute to the NAD(+) site. His114 and Glu184 together coordinate Zn(2+).

The protein belongs to the ApnO family. The cofactor is Zn(2+).

The enzyme catalyses D-apionate + NAD(+) = 3-oxoisoapionate + NADH + H(+). It participates in carbohydrate metabolism. Involved in catabolism of D-apiose. Catalyzes the conversion of D-apionate to 3-oxo-isoapionate. This is D-apionate oxidoisomerase from Cupriavidus necator (strain ATCC 43291 / DSM 13513 / CCUG 52238 / LMG 8453 / N-1) (Ralstonia eutropha).